A 572-amino-acid chain; its full sequence is Hemolysin-1 (572 aa).

Functionally, bacterial hemolysins are exotoxins that attack blood cell membranes and cause cell rupture by mechanisms not clearly defined. This Aeromonas salmonicida protein is Hemolysin-1 (ash1).